The sequence spans 297 residues: MGFVKVVKNKAYFKRYQVKFRRRREGKTDYYARKRLVIQDKNKYNTPKYRMIVRVTNRDIICQIAYARIEGDMIVCAAYAHKLPKYGVKVGLTNYAAAYCTGLLLARRLLNRFGMDKIYEGQVEVTGDEYNVESIDGQPGAFTCYLDAGLARTTTGNKVFGALKGAVDGGLSIPHSTKRFPGYDSESKEFNAEVHRKHIMGQNVADYMRYLMEEDEDAYKKQFSQYIKNSVTPDMMEEMYKKAHAAIRENPVYEKKPKKEVKKKRWNRPKMSLAQKKDRVAQKKASFLRAQERAAES.

The residue at position 2 (Gly-2) is an N-acetylglycine. An N6-acetyllysine mark is found at Lys-5 and Lys-48. Ser-185 is subject to Phosphoserine. Lys-220 is modified (N6-acetyllysine; alternate). Lys-220 is covalently cross-linked (Glycyl lysine isopeptide (Lys-Gly) (interchain with G-Cter in SUMO1); alternate). Residue Lys-220 forms a Glycyl lysine isopeptide (Lys-Gly) (interchain with G-Cter in SUMO2); alternate linkage. Position 232 is a phosphothreonine (Thr-232). Positions 253–297 (YEKKPKKEVKKKRWNRPKMSLAQKKDRVAQKKASFLRAQERAAES) are disordered. The span at 258–268 (KKEVKKKRWNR) shows a compositional bias: basic residues. Phosphoserine is present on Ser-272.

It belongs to the universal ribosomal protein uL18 family. As to quaternary structure, component of the large ribosomal subunit (LSU). Part of the 5S RNP complex, which is a LSU subcomplex composed of the 5S RNA, RPL5 and RPL11. Component of a hexameric 5S RNP precursor complex, composed of 5S RNA, RRS1, RPF2/BXDC1, RPL5, RPL11 and HEATR3; this complex acts as a precursor for ribosome assembly. Interacts with NVL in an ATP-dependent manner. Interacts with RRP1B. Interacts with IPO5, IPO7 and KPNB1; these interactions may be involved in RPL5 nuclear import for the assembly of ribosomal subunits. Interacts with RRP1B.

It localises to the cytoplasm. It is found in the nucleus. The protein resides in the nucleolus. In terms of biological role, component of the ribosome, a large ribonucleoprotein complex responsible for the synthesis of proteins in the cell. The small ribosomal subunit (SSU) binds messenger RNAs (mRNAs) and translates the encoded message by selecting cognate aminoacyl-transfer RNA (tRNA) molecules. The large subunit (LSU) contains the ribosomal catalytic site termed the peptidyl transferase center (PTC), which catalyzes the formation of peptide bonds, thereby polymerizing the amino acids delivered by tRNAs into a polypeptide chain. The nascent polypeptides leave the ribosome through a tunnel in the LSU and interact with protein factors that function in enzymatic processing, targeting, and the membrane insertion of nascent chains at the exit of the ribosomal tunnel. As part of the 5S RNP/5S ribonucleoprotein particle it is an essential component of the LSU, required for its formation and the maturation of rRNAs. It also couples ribosome biogenesis to p53/TP53 activation. As part of the 5S RNP it accumulates in the nucleoplasm and inhibits MDM2, when ribosome biogenesis is perturbed, mediating the stabilization and the activation of TP53. The sequence is that of Large ribosomal subunit protein uL18 (RPL5) from Macaca fascicularis (Crab-eating macaque).